The primary structure comprises 180 residues: Zinc finger protein 740 (180 aa).

Positions 1–11 (MMLSQIASKQA) are enriched in polar residues. The tract at residues 1-62 (MMLSQIASKQ…KEDDSLAEAS (62 aa)) is disordered. Residue Lys-9 forms a Glycyl lysine isopeptide (Lys-Gly) (interchain with G-Cter in SUMO2) linkage. At Ser-19 the chain carries Phosphoserine. Positions 31-56 (CKPRFDLSSKGHRKDSDKSRNRKEDD) are enriched in basic and acidic residues. C2H2-type zinc fingers lie at residues 88-110 (FICE…VLIH) and 116-138 (FECD…KRVH). The segment at 144–166 (YQCERCHQCFSRTDRLLRHKRMC) adopts a C2H2-type 3; atypical zinc-finger fold.

This sequence belongs to the krueppel C2H2-type zinc-finger protein family.

The protein localises to the nucleus. Functionally, may be involved in transcriptional regulation. The polypeptide is Zinc finger protein 740 (Znf740) (Mus musculus (Mouse)).